The sequence spans 159 residues: MAVLLKLGVLCSGQGARALLLRSRVVRPAYVSAFLQDQPTQGRCGTQHIHLSPSHHSGSKAASLHWTSERVVSVLLLGLIPAGYLNPCSVVDYSLAAALTLHSHWGLGQVVTDYVHGDTLPKAARAGLLALSALTFAGLCYFNYHDVGICRAVAMLWKL.

A mitochondrion-targeting transit peptide spans 1 to 56 (MAVLLKLGVLCSGQGARALLLRSRVVRPAYVSAFLQDQPTQGRCGTQHIHLSPSHH). The Mitochondrial matrix segment spans residues 57-63 (SGSKAAS). The chain crosses the membrane as a helical span at residues 64–85 (LHWTSERVVSVLLLGLIPAGYL). The Mitochondrial intermembrane portion of the chain corresponds to 86 to 90 (NPCSV). The helical transmembrane segment at 91-111 (VDYSLAAALTLHSHWGLGQVV) threads the bilayer. Residue histidine 102 participates in heme b binding. Over 112-120 (TDYVHGDTL) the chain is Mitochondrial matrix. Tyrosine 114 contacts a ubiquinone. Residues 121–142 (PKAARAGLLALSALTFAGLCYF) traverse the membrane as a helical segment. Residues 143 to 159 (NYHDVGICRAVAMLWKL) are Mitochondrial intermembrane-facing.

This sequence belongs to the CybS family. As to quaternary structure, component of complex II composed of four subunits: the flavoprotein (FP) SDHA, iron-sulfur protein (IP) SDHB, and a cytochrome b560 composed of SDHC and SDHD.

It localises to the mitochondrion inner membrane. It participates in carbohydrate metabolism; tricarboxylic acid cycle. Membrane-anchoring subunit of succinate dehydrogenase (SDH) that is involved in complex II of the mitochondrial electron transport chain and is responsible for transferring electrons from succinate to ubiquinone (coenzyme Q). SDH also oxidizes malate to the non-canonical enol form of oxaloacetate, enol-oxaloacetate. Enol-oxaloacetate, which is a potent inhibitor of the succinate dehydrogenase activity, is further isomerized into keto-oxaloacetate. In Mus musculus (Mouse), this protein is Succinate dehydrogenase [ubiquinone] cytochrome b small subunit, mitochondrial (Sdhd).